The sequence spans 255 residues: Methylthioribulose-1-phosphate dehydratase (255 aa).

Cysteine 111 contacts substrate. Residues histidine 128 and histidine 130 each contribute to the Zn(2+) site. Catalysis depends on glutamate 157, which acts as the Proton donor/acceptor. Histidine 213 serves as a coordination point for Zn(2+).

The protein belongs to the aldolase class II family. MtnB subfamily. The cofactor is Zn(2+).

The protein resides in the cytoplasm. The enzyme catalyses 5-(methylsulfanyl)-D-ribulose 1-phosphate = 5-methylsulfanyl-2,3-dioxopentyl phosphate + H2O. Its pathway is amino-acid biosynthesis; L-methionine biosynthesis via salvage pathway; L-methionine from S-methyl-5-thio-alpha-D-ribose 1-phosphate: step 2/6. In terms of biological role, catalyzes the dehydration of methylthioribulose-1-phosphate (MTRu-1-P) into 2,3-diketo-5-methylthiopentyl-1-phosphate (DK-MTP-1-P). This is Methylthioribulose-1-phosphate dehydratase from Talaromyces stipitatus (strain ATCC 10500 / CBS 375.48 / QM 6759 / NRRL 1006) (Penicillium stipitatum).